The following is a 250-amino-acid chain: MTVKKLYFVPAGRCMLDRSSVNSTLTPGNLLNLPVWCYLLETEEGPILVDTGMPESAVHNENLFEGTFAEGQILPKMTEEDRIVTILKRVGYKPEDLLYIISSHLHFDHAGGNGAFSNTPIIIQRAEYEAAQYREEYLKECILPNLNYKIIEGDYEVVPGVQLLYTPGHSPGHQSLLIETEKSGLVLLTIDASYTKENFEDEVPFAGFDSELALSSIKRLKEVVMKEKPIVFFGHDIEQEKGCKVFPEYI.

Residues His-104, His-106, Asp-108, His-109, His-169, Asp-191, and His-235 each contribute to the Zn(2+) site.

The protein belongs to the metallo-beta-lactamase superfamily. In terms of assembly, monomer. Zn(2+) serves as cofactor.

It carries out the reaction an N-acyl-L-homoserine lactone + H2O = an N-acyl-L-homoserine + H(+). In Bacillus cereus, this protein is N-acyl homoserine lactonase.